We begin with the raw amino-acid sequence, 350 residues long: Anthranilate phosphoribosyltransferase (350 aa).

Residues G94, 97–98 (GD), T102, 104–107 (NIST), 122–130 (KHGNRSVSS), and S134 each bind 5-phospho-alpha-D-ribose 1-diphosphate. G94 serves as a coordination point for anthranilate. Mg(2+) is bound at residue S106. Residue N125 participates in anthranilate binding. R180 provides a ligand contact to anthranilate. Residues D239 and E240 each coordinate Mg(2+).

This sequence belongs to the anthranilate phosphoribosyltransferase family. As to quaternary structure, homodimer. Requires Mg(2+) as cofactor.

The enzyme catalyses N-(5-phospho-beta-D-ribosyl)anthranilate + diphosphate = 5-phospho-alpha-D-ribose 1-diphosphate + anthranilate. It participates in amino-acid biosynthesis; L-tryptophan biosynthesis; L-tryptophan from chorismate: step 2/5. Functionally, catalyzes the transfer of the phosphoribosyl group of 5-phosphorylribose-1-pyrophosphate (PRPP) to anthranilate to yield N-(5'-phosphoribosyl)-anthranilate (PRA). This chain is Anthranilate phosphoribosyltransferase, found in Geotalea daltonii (strain DSM 22248 / JCM 15807 / FRC-32) (Geobacter daltonii).